The following is a 613-amino-acid chain: Dihydroxy-acid dehydratase (613 aa).

Aspartate 81 contacts Mg(2+). Residue cysteine 122 coordinates [2Fe-2S] cluster. Mg(2+) contacts are provided by aspartate 123 and lysine 124. At lysine 124 the chain carries N6-carboxylysine. Cysteine 193 provides a ligand contact to [2Fe-2S] cluster. Position 489 (glutamate 489) interacts with Mg(2+). Serine 515 functions as the Proton acceptor in the catalytic mechanism.

Belongs to the IlvD/Edd family. As to quaternary structure, homodimer. The cofactor is [2Fe-2S] cluster. Requires Mg(2+) as cofactor.

The enzyme catalyses (2R)-2,3-dihydroxy-3-methylbutanoate = 3-methyl-2-oxobutanoate + H2O. It carries out the reaction (2R,3R)-2,3-dihydroxy-3-methylpentanoate = (S)-3-methyl-2-oxopentanoate + H2O. It participates in amino-acid biosynthesis; L-isoleucine biosynthesis; L-isoleucine from 2-oxobutanoate: step 3/4. Its pathway is amino-acid biosynthesis; L-valine biosynthesis; L-valine from pyruvate: step 3/4. Functions in the biosynthesis of branched-chain amino acids. Catalyzes the dehydration of (2R,3R)-2,3-dihydroxy-3-methylpentanoate (2,3-dihydroxy-3-methylvalerate) into 2-oxo-3-methylpentanoate (2-oxo-3-methylvalerate) and of (2R)-2,3-dihydroxy-3-methylbutanoate (2,3-dihydroxyisovalerate) into 2-oxo-3-methylbutanoate (2-oxoisovalerate), the penultimate precursor to L-isoleucine and L-valine, respectively. The protein is Dihydroxy-acid dehydratase of Pseudomonas putida (strain ATCC 700007 / DSM 6899 / JCM 31910 / BCRC 17059 / LMG 24140 / F1).